A 106-amino-acid polypeptide reads, in one-letter code: UPF0145 protein CLH_2273 (106 aa).

The protein belongs to the UPF0145 family.

This Clostridium botulinum (strain Alaska E43 / Type E3) protein is UPF0145 protein CLH_2273.